The primary structure comprises 345 residues: NADH-quinone oxidoreductase subunit H (345 aa).

The next 8 helical transmembrane spans lie at 9 to 29 (ALGA…LVFA), 82 to 102 (VVMV…EGVV), 108 to 128 (VGVI…TLAG), 154 to 174 (MGLA…MEIV), 183 to 203 (LLGW…VTAF), 241 to 261 (YVNW…GYLV), 282 to 302 (LLQF…FIWV), and 325 to 345 (IALA…AVGL).

Belongs to the complex I subunit 1 family. As to quaternary structure, NDH-1 is composed of 14 different subunits. Subunits NuoA, H, J, K, L, M, N constitute the membrane sector of the complex.

It localises to the cell inner membrane. It carries out the reaction a quinone + NADH + 5 H(+)(in) = a quinol + NAD(+) + 4 H(+)(out). In terms of biological role, NDH-1 shuttles electrons from NADH, via FMN and iron-sulfur (Fe-S) centers, to quinones in the respiratory chain. The immediate electron acceptor for the enzyme in this species is believed to be ubiquinone. Couples the redox reaction to proton translocation (for every two electrons transferred, four hydrogen ions are translocated across the cytoplasmic membrane), and thus conserves the redox energy in a proton gradient. This subunit may bind ubiquinone. The protein is NADH-quinone oxidoreductase subunit H of Salinibacter ruber (strain DSM 13855 / M31).